Here is a 67-residue protein sequence, read N- to C-terminus: Non-specific lipid-transfer protein 2P (67 aa).

Intrachain disulfides connect cysteine 2–cysteine 34, cysteine 10–cysteine 24, cysteine 25–cysteine 60, and cysteine 36–cysteine 67.

Transfer lipids across membranes. May play a role in plant defense or in the biosynthesis of cuticle layers. In Triticum aestivum (Wheat), this protein is Non-specific lipid-transfer protein 2P.